We begin with the raw amino-acid sequence, 394 residues long: 1-deoxy-D-xylulose 5-phosphate reductoisomerase (394 aa).

NADPH is bound by residues T10, G11, S12, I13, N38, and N125. K126 contributes to the 1-deoxy-D-xylulose 5-phosphate binding site. E127 is an NADPH binding site. D151 lines the Mn(2+) pocket. Positions 152, 153, 182, and 205 each coordinate 1-deoxy-D-xylulose 5-phosphate. E153 lines the Mn(2+) pocket. NADPH is bound at residue G211. S218, N223, K224, and E227 together coordinate 1-deoxy-D-xylulose 5-phosphate. Position 227 (E227) interacts with Mn(2+).

This sequence belongs to the DXR family. Mg(2+) is required as a cofactor. It depends on Mn(2+) as a cofactor.

It carries out the reaction 2-C-methyl-D-erythritol 4-phosphate + NADP(+) = 1-deoxy-D-xylulose 5-phosphate + NADPH + H(+). The protein operates within isoprenoid biosynthesis; isopentenyl diphosphate biosynthesis via DXP pathway; isopentenyl diphosphate from 1-deoxy-D-xylulose 5-phosphate: step 1/6. Its function is as follows. Catalyzes the NADPH-dependent rearrangement and reduction of 1-deoxy-D-xylulose-5-phosphate (DXP) to 2-C-methyl-D-erythritol 4-phosphate (MEP). The chain is 1-deoxy-D-xylulose 5-phosphate reductoisomerase from Methylococcus capsulatus (strain ATCC 33009 / NCIMB 11132 / Bath).